Consider the following 184-residue polypeptide: Potassium-transporting ATPase KdpC subunit (184 aa).

Residues 6–26 (TAVLYTIISAVFLGLGYPLIM) traverse the membrane as a helical segment.

Belongs to the KdpC family. The system is composed of three essential subunits: KdpA, KdpB and KdpC.

The protein resides in the cell inner membrane. Functionally, part of the high-affinity ATP-driven potassium transport (or Kdp) system, which catalyzes the hydrolysis of ATP coupled with the electrogenic transport of potassium into the cytoplasm. This subunit acts as a catalytic chaperone that increases the ATP-binding affinity of the ATP-hydrolyzing subunit KdpB by the formation of a transient KdpB/KdpC/ATP ternary complex. This Acidobacterium capsulatum (strain ATCC 51196 / DSM 11244 / BCRC 80197 / JCM 7670 / NBRC 15755 / NCIMB 13165 / 161) protein is Potassium-transporting ATPase KdpC subunit.